The primary structure comprises 208 residues: Bacitracin transport permease protein BCRB (208 aa).

6 helical membrane passes run 23-43 (LYIVLLIGVPLYGVITSYLFN), 70-90 (VLLLIWIMMLTLIAWVLTLLF), 111-131 (FMIGGALLFFLVSPIIFVTLL), 135-155 (YVPTIIFTIIISMVSIMVYGT), 159-179 (ALFPWSAVWVIASGTFFPEYP), and 182-202 (YSFISVAATTVLGLAATIVYF).

The protein localises to the cell membrane. In terms of biological role, part of the binding-protein-dependent transport system for bacitracin that confer resistance to this antibiotic; probably responsible for the translocation of the substrate across the membrane. The sequence is that of Bacitracin transport permease protein BCRB (bcrB) from Bacillus licheniformis.